Consider the following 272-residue polypeptide: Ribosomal RNA small subunit methyltransferase A (272 aa).

S-adenosyl-L-methionine contacts are provided by H13, L15, G40, E61, D85, and N105.

It belongs to the class I-like SAM-binding methyltransferase superfamily. rRNA adenine N(6)-methyltransferase family. RsmA subfamily.

Its subcellular location is the cytoplasm. It carries out the reaction adenosine(1518)/adenosine(1519) in 16S rRNA + 4 S-adenosyl-L-methionine = N(6)-dimethyladenosine(1518)/N(6)-dimethyladenosine(1519) in 16S rRNA + 4 S-adenosyl-L-homocysteine + 4 H(+). Its function is as follows. Specifically dimethylates two adjacent adenosines (A1518 and A1519) in the loop of a conserved hairpin near the 3'-end of 16S rRNA in the 30S particle. May play a critical role in biogenesis of 30S subunits. The polypeptide is Ribosomal RNA small subunit methyltransferase A (Bacteroides fragilis (strain ATCC 25285 / DSM 2151 / CCUG 4856 / JCM 11019 / LMG 10263 / NCTC 9343 / Onslow / VPI 2553 / EN-2)).